The following is a 178-amino-acid chain: Endoribonuclease YbeY (178 aa).

Zn(2+) contacts are provided by histidine 118, histidine 122, and histidine 128.

This sequence belongs to the endoribonuclease YbeY family. It depends on Zn(2+) as a cofactor.

Its subcellular location is the cytoplasm. Functionally, single strand-specific metallo-endoribonuclease involved in late-stage 70S ribosome quality control and in maturation of the 3' terminus of the 16S rRNA. The chain is Endoribonuclease YbeY from Mycolicibacterium gilvum (strain PYR-GCK) (Mycobacterium gilvum (strain PYR-GCK)).